Consider the following 346-residue polypeptide: Putative glycosyltransferase HI_0523 (346 aa).

This sequence belongs to the glycosyltransferase 9 family.

The chain is Putative glycosyltransferase HI_0523 from Haemophilus influenzae (strain ATCC 51907 / DSM 11121 / KW20 / Rd).